We begin with the raw amino-acid sequence, 255 residues long: 5'-nucleotidase SurE (255 aa).

A divalent metal cation contacts are provided by Asp8, Asp9, Ser40, and Asn93.

Belongs to the SurE nucleotidase family. A divalent metal cation serves as cofactor.

Its subcellular location is the cytoplasm. The catalysed reaction is a ribonucleoside 5'-phosphate + H2O = a ribonucleoside + phosphate. Nucleotidase that shows phosphatase activity on nucleoside 5'-monophosphates. The chain is 5'-nucleotidase SurE from Nitrobacter winogradskyi (strain ATCC 25391 / DSM 10237 / CIP 104748 / NCIMB 11846 / Nb-255).